The primary structure comprises 354 residues: Methylthioribose-1-phosphate isomerase (354 aa).

Residue D246 is the Proton donor of the active site.

Belongs to the eIF-2B alpha/beta/delta subunits family. MtnA subfamily.

The protein localises to the cytoplasm. The protein resides in the nucleus. The enzyme catalyses 5-(methylsulfanyl)-alpha-D-ribose 1-phosphate = 5-(methylsulfanyl)-D-ribulose 1-phosphate. Its pathway is amino-acid biosynthesis; L-methionine biosynthesis via salvage pathway; L-methionine from S-methyl-5-thio-alpha-D-ribose 1-phosphate: step 1/6. In terms of biological role, catalyzes the interconversion of methylthioribose-1-phosphate (MTR-1-P) into methylthioribulose-1-phosphate (MTRu-1-P). The sequence is that of Methylthioribose-1-phosphate isomerase (mri1) from Xenopus laevis (African clawed frog).